Here is a 513-residue protein sequence, read N- to C-terminus: Sugar transport protein MST8 (513 aa).

Residues Met-1 to Pro-17 are Cytoplasmic-facing. A helical membrane pass occupies residues Gly-18–Phe-38. Topologically, residues Gly-39–Glu-81 are extracellular. Residues Leu-82 to Ser-102 traverse the membrane as a helical segment. The Cytoplasmic portion of the chain corresponds to Val-103–Gly-116. Residues Gly-117–Leu-137 traverse the membrane as a helical segment. Topologically, residues Ile-138–Ile-139 are extracellular. Residues Gly-140–Ser-160 form a helical membrane-spanning segment. Topologically, residues Glu-161–Arg-166 are cytoplasmic. A helical membrane pass occupies residues Met-167–Asn-187. The Extracellular segment spans residues Leu-188–Gly-201. Residues Trp-202–Phe-222 form a helical membrane-spanning segment. The Cytoplasmic portion of the chain corresponds to Leu-223 to Leu-294. The helical transmembrane segment at Gln-295 to Gly-315 threads the bilayer. Residues Phe-316–Ala-320 are Extracellular-facing. The helical transmembrane segment at Ser-321 to Ala-341 threads the bilayer. The Cytoplasmic portion of the chain corresponds to Thr-342–Gly-347. The helical transmembrane segment at Arg-348–Thr-368 threads the bilayer. Residues Leu-369 to Gly-385 are Extracellular-facing. Residues Tyr-386 to Gly-406 form a helical membrane-spanning segment. The Cytoplasmic segment spans residues Pro-407–Ala-425. The helical transmembrane segment at Gln-426–Met-446 threads the bilayer. Residues Met-447–His-450 lie on the Extracellular side of the membrane. The chain crosses the membrane as a helical span at residues Leu-451 to Phe-471. At Phe-472–Thr-512 the chain is on the cytoplasmic side.

The protein belongs to the major facilitator superfamily. Sugar transporter (TC 2.A.1.1) family. As to expression, expressed specifically in anthers.

Its subcellular location is the membrane. Mediates active uptake of hexoses by sugar:proton symport. May play an important role in transporting monosaccharides during anther development. This Oryza sativa subsp. japonica (Rice) protein is Sugar transport protein MST8.